Consider the following 639-residue polypeptide: Chaperone protein DnaK (639 aa).

The residue at position 198 (Thr-198) is a Phosphothreonine; by autocatalysis. Over residues 603-618 (AKAQTQGGAQEGAAKQ) the composition is skewed to low complexity. The segment at 603–639 (AKAQTQGGAQEGAAKQSNATADDVVDAEFEEVKDDKK) is disordered. Residues 625-639 (DVVDAEFEEVKDDKK) show a composition bias toward acidic residues.

Belongs to the heat shock protein 70 family.

Its function is as follows. Acts as a chaperone. In Shewanella oneidensis (strain ATCC 700550 / JCM 31522 / CIP 106686 / LMG 19005 / NCIMB 14063 / MR-1), this protein is Chaperone protein DnaK.